A 68-amino-acid chain; its full sequence is MAVKFHLCLLLIILVGMGAHVAFADQQFCDHPYGTCYYVEDECPEDMPVDCSENFYCTEPTNKCCCYE.

Positions 1-24 are cleaved as a signal peptide; sequence MAVKFHLCLLLIILVGMGAHVAFA.

The protein belongs to the Cnidaria small cysteine-rich protein (SCRiP) family. gamma subfamily. Post-translationally, contains 4 disulfide bonds.

The protein resides in the secreted. It localises to the nematocyst. Functionally, induces neurotoxic symptoms on zebrafish. Has also been claimed to be implied in calcification, but tests on homolog proteins suggest that proteins of this family have a neurotoxic function and not a calcification function. This is Small cysteine-rich protein 2 from Orbicella faveolata (Mountainous star coral).